Consider the following 272-residue polypeptide: Tropinone reductase-like 1 (272 aa).

17 to 41 (IITGGASGIGACTAELFHENGAKVV) lines the NAD(+) pocket. S150 is a substrate binding site. Catalysis depends on Y163, which acts as the Proton acceptor.

The protein belongs to the short-chain dehydrogenases/reductases (SDR) family.

In terms of biological role, has no tropinone reductase activity. In Erythroxylum coca (Coca plant), this protein is Tropinone reductase-like 1.